A 193-amino-acid chain; its full sequence is Putative manganese efflux pump MntP (193 aa).

Helical transmembrane passes span 6-26, 39-59, 61-81, 106-126, 132-152, and 165-185; these read VVFV…GIAC, VAGT…YAGL, IADV…TVIG, LGLL…GLTF, NIGL…YLGF, and WVGI…LAEH.

The protein belongs to the MntP (TC 9.B.29) family.

The protein localises to the cell membrane. In terms of biological role, probably functions as a manganese efflux pump. The sequence is that of Putative manganese efflux pump MntP from Dehalococcoides mccartyi (strain ATCC BAA-2266 / KCTC 15142 / 195) (Dehalococcoides ethenogenes (strain 195)).